The chain runs to 131 residues: Norrin (131 aa).

Residues 1-24 form the signal peptide; it reads MRNHVLAASISMLSLLAIMGDTDS. 4 disulfides stabilise this stretch: Cys-37/Cys-94, Cys-53/Cys-108, Cys-63/Cys-124, and Cys-67/Cys-126. Residues 37–130 enclose the CTCK domain; it reads CMRHHYVDSI…ILSCHCEECS (94 aa).

As to quaternary structure, homodimer; disulfide-linked. Component of a complex, at least composed of TSPAN12, FZD4, LRP5/6 and norrin (NDP). Binds FZD4 with high affinity. Interacts with LRP6 (via Beta-propellers 1 and 2). As to expression, expressed in the outer nuclear, inner nuclear and ganglion cell layers of the retina.

Its subcellular location is the secreted. Activates the canonical Wnt signaling pathway through FZD4 and LRP5 coreceptor. Plays a central role in retinal vascularization by acting as a ligand for FZD4 that signals via stabilizing beta-catenin (CTNNB1) and activating LEF/TCF-mediated transcriptional programs. Acts in concert with TSPAN12 to activate FZD4 independently of the Wnt-dependent activation of FZD4, suggesting the existence of a Wnt-independent signaling that also promote accumulation the beta-catenin (CTNNB1). May be involved in a pathway that regulates neural cell differentiation and proliferation. Possible role in neuroectodermal cell-cell interaction. The polypeptide is Norrin (Ndp) (Mus musculus (Mouse)).